We begin with the raw amino-acid sequence, 275 residues long: Penicillin-insensitive murein endopeptidase (275 aa).

Positions 1 to 19 (MKNWIVGMVALVTMVPVMA) are cleaved as a signal peptide. Cystine bridges form between Cys-44-Cys-264, Cys-187-Cys-235, and Cys-216-Cys-223. Zn(2+) is bound by residues His-110, His-113, Asp-120, Asp-147, and His-211. The interval 227 to 262 (DTPPPGDGCGAELESWFQPPPPSAKPGKTLPPPLPP) is disordered. Residues 244 to 262 (QPPPPSAKPGKTLPPPLPP) are compositionally biased toward pro residues.

Belongs to the peptidase M74 family. Dimer. Zn(2+) is required as a cofactor.

It is found in the periplasm. In terms of biological role, murein endopeptidase that cleaves the D-alanyl-meso-2,6-diamino-pimelyl amide bond that connects peptidoglycan strands. Likely plays a role in the removal of murein from the sacculus. The protein is Penicillin-insensitive murein endopeptidase of Yersinia pestis.